Consider the following 618-residue polypeptide: DNA mismatch repair protein MutL (618 aa).

Positions Ala-366–Gly-381 are enriched in low complexity. Positions Ala-366–Lys-405 are disordered. The segment covering Gly-382–Ser-392 has biased composition (gly residues).

The protein belongs to the DNA mismatch repair MutL/HexB family.

In terms of biological role, this protein is involved in the repair of mismatches in DNA. It is required for dam-dependent methyl-directed DNA mismatch repair. May act as a 'molecular matchmaker', a protein that promotes the formation of a stable complex between two or more DNA-binding proteins in an ATP-dependent manner without itself being part of a final effector complex. This is DNA mismatch repair protein MutL from Salmonella agona (strain SL483).